The chain runs to 85 residues: Small ribosomal subunit protein uS17 (85 aa).

Belongs to the universal ribosomal protein uS17 family. In terms of assembly, part of the 30S ribosomal subunit.

One of the primary rRNA binding proteins, it binds specifically to the 5'-end of 16S ribosomal RNA. This is Small ribosomal subunit protein uS17 from Anaeromyxobacter dehalogenans (strain 2CP-1 / ATCC BAA-258).